Here is a 741-residue protein sequence, read N- to C-terminus: Wall-associated receptor kinase 3 (741 aa).

Residues 1-23 form the signal peptide; it reads MKFQEGVFLVVIFFLAYTQLVKG. Topologically, residues 24 to 342 are extracellular; sequence QHQPREDCKL…CTRPEYKRTR (319 aa). Residues asparagine 37, asparagine 59, asparagine 78, asparagine 100, asparagine 103, asparagine 141, asparagine 192, asparagine 199, asparagine 232, asparagine 246, asparagine 261, and asparagine 266 are each glycosylated (N-linked (GlcNAc...) asparagine). Residues 245-292 enclose the EGF-like 1 domain; the sequence is GNQTCEQAGSTRICGKNSSCYNSTTRNGYICKCNEGYDGNPYRSEGCK. 6 disulfide bridges follow: cysteine 249-cysteine 264, cysteine 258-cysteine 275, cysteine 277-cysteine 291, cysteine 297-cysteine 310, cysteine 304-cysteine 319, and cysteine 321-cysteine 333. The region spanning 293 to 334 is the EGF-like 2; calcium-binding domain; it reads DIDECISDTHNCSDPKTCRNRDGGFDCKCPSGYDLNSSMSCT. The N-linked (GlcNAc...) asparagine glycan is linked to asparagine 303. Asparagine 328 carries an N-linked (GlcNAc...) asparagine glycan. The chain crosses the membrane as a helical span at residues 343 to 363; that stretch reads IFLVIIIGVLVLLLAAICIQH. At 364-741 the chain is on the cytoplasmic side; it reads ATKQRKYTKL…VAILDIETGR (378 aa). Threonine 404 carries the phosphothreonine modification. The Protein kinase domain maps to 415 to 698; sequence YDESRILGQG…RVEKTKHKWS (284 aa). ATP-binding positions include 421-429 and lysine 443; that span reads LGQGGQGTV. Residue tyrosine 488 is modified to Phosphotyrosine. Residue aspartate 540 is the Proton acceptor of the active site. Phosphothreonine is present on residues threonine 574 and threonine 579. Tyrosine 587 is modified (phosphotyrosine).

Belongs to the protein kinase superfamily. Ser/Thr protein kinase family. As to expression, predominantly expressed in green tissues such as stems and leaves.

The protein resides in the membrane. It catalyses the reaction L-seryl-[protein] + ATP = O-phospho-L-seryl-[protein] + ADP + H(+). The enzyme catalyses L-threonyl-[protein] + ATP = O-phospho-L-threonyl-[protein] + ADP + H(+). Functionally, serine/threonine-protein kinase that may function as a signaling receptor of extracellular matrix component. Binding to pectin may have significance in the control of cell expansion, morphogenesis and development. The chain is Wall-associated receptor kinase 3 (WAK3) from Arabidopsis thaliana (Mouse-ear cress).